An 807-amino-acid polypeptide reads, in one-letter code: Glycerol-3-phosphate acyltransferase (807 aa).

Positions 308 to 313 match the HXXXXD motif motif; it reads CHRSHM.

The protein belongs to the GPAT/DAPAT family.

It is found in the cell inner membrane. The catalysed reaction is sn-glycerol 3-phosphate + an acyl-CoA = a 1-acyl-sn-glycero-3-phosphate + CoA. The protein operates within phospholipid metabolism; CDP-diacylglycerol biosynthesis; CDP-diacylglycerol from sn-glycerol 3-phosphate: step 1/3. The sequence is that of Glycerol-3-phosphate acyltransferase from Shewanella baltica (strain OS223).